We begin with the raw amino-acid sequence, 198 residues long: Pyridoxal 5'-phosphate synthase subunit PdxT (198 aa).

An L-glutamine-binding site is contributed by 49–51 (GES). The active-site Nucleophile is C81. L-glutamine-binding positions include R113 and 141-142 (IR). Residues H177 and E179 each act as charge relay system in the active site.

This sequence belongs to the glutaminase PdxT/SNO family. In terms of assembly, in the presence of PdxS, forms a dodecamer of heterodimers. Only shows activity in the heterodimer.

It catalyses the reaction aldehydo-D-ribose 5-phosphate + D-glyceraldehyde 3-phosphate + L-glutamine = pyridoxal 5'-phosphate + L-glutamate + phosphate + 3 H2O + H(+). The enzyme catalyses L-glutamine + H2O = L-glutamate + NH4(+). The protein operates within cofactor biosynthesis; pyridoxal 5'-phosphate biosynthesis. In terms of biological role, catalyzes the hydrolysis of glutamine to glutamate and ammonia as part of the biosynthesis of pyridoxal 5'-phosphate. The resulting ammonia molecule is channeled to the active site of PdxS. This Mycobacterium leprae (strain TN) protein is Pyridoxal 5'-phosphate synthase subunit PdxT.